We begin with the raw amino-acid sequence, 238 residues long: NAD(P)H-quinone oxidoreductase subunit K 1 (238 aa).

[4Fe-4S] cluster-binding residues include Cys54, Cys55, Cys119, and Cys150.

The protein belongs to the complex I 20 kDa subunit family. In terms of assembly, NDH-1 can be composed of about 15 different subunits; different subcomplexes with different compositions have been identified which probably have different functions. [4Fe-4S] cluster serves as cofactor.

Its subcellular location is the cellular thylakoid membrane. It catalyses the reaction a plastoquinone + NADH + (n+1) H(+)(in) = a plastoquinol + NAD(+) + n H(+)(out). It carries out the reaction a plastoquinone + NADPH + (n+1) H(+)(in) = a plastoquinol + NADP(+) + n H(+)(out). Its function is as follows. NDH-1 shuttles electrons from an unknown electron donor, via FMN and iron-sulfur (Fe-S) centers, to quinones in the respiratory and/or the photosynthetic chain. The immediate electron acceptor for the enzyme in this species is believed to be plastoquinone. Couples the redox reaction to proton translocation, and thus conserves the redox energy in a proton gradient. Cyanobacterial NDH-1 also plays a role in inorganic carbon-concentration. The chain is NAD(P)H-quinone oxidoreductase subunit K 1 from Cyanothece sp. (strain PCC 7425 / ATCC 29141).